The primary structure comprises 384 residues: UDP-4-amino-4-deoxy-L-arabinose--oxoglutarate aminotransferase (384 aa).

Lys182 is modified (N6-(pyridoxal phosphate)lysine).

This sequence belongs to the DegT/DnrJ/EryC1 family. ArnB subfamily. As to quaternary structure, homodimer. The cofactor is pyridoxal 5'-phosphate.

The enzyme catalyses UDP-4-amino-4-deoxy-beta-L-arabinose + 2-oxoglutarate = UDP-beta-L-threo-pentopyranos-4-ulose + L-glutamate. Its pathway is nucleotide-sugar biosynthesis; UDP-4-deoxy-4-formamido-beta-L-arabinose biosynthesis; UDP-4-deoxy-4-formamido-beta-L-arabinose from UDP-alpha-D-glucuronate: step 2/3. It participates in bacterial outer membrane biogenesis; lipopolysaccharide biosynthesis. Its function is as follows. Catalyzes the conversion of UDP-4-keto-arabinose (UDP-Ara4O) to UDP-4-amino-4-deoxy-L-arabinose (UDP-L-Ara4N). The modified arabinose is attached to lipid A and is required for resistance to polymyxin and cationic antimicrobial peptides. This chain is UDP-4-amino-4-deoxy-L-arabinose--oxoglutarate aminotransferase, found in Yersinia pseudotuberculosis serotype O:1b (strain IP 31758).